A 372-amino-acid polypeptide reads, in one-letter code: Queuine tRNA-ribosyltransferase (372 aa).

The active-site Proton acceptor is Asp92. Substrate-binding positions include 92 to 96 (DSGGF), Asp146, Gln188, and Gly215. Positions 246–252 (GIGTLRE) are RNA binding. Asp265 functions as the Nucleophile in the catalytic mechanism. The interval 270–274 (TRLGR) is RNA binding; important for wobble base 34 recognition. Residues Cys303, Cys305, Cys308, and His334 each contribute to the Zn(2+) site.

It belongs to the queuine tRNA-ribosyltransferase family. As to quaternary structure, homodimer. Within each dimer, one monomer is responsible for RNA recognition and catalysis, while the other monomer binds to the replacement base PreQ1. Zn(2+) is required as a cofactor.

It catalyses the reaction 7-aminomethyl-7-carbaguanine + guanosine(34) in tRNA = 7-aminomethyl-7-carbaguanosine(34) in tRNA + guanine. It functions in the pathway tRNA modification; tRNA-queuosine biosynthesis. Functionally, catalyzes the base-exchange of a guanine (G) residue with the queuine precursor 7-aminomethyl-7-deazaguanine (PreQ1) at position 34 (anticodon wobble position) in tRNAs with GU(N) anticodons (tRNA-Asp, -Asn, -His and -Tyr). Catalysis occurs through a double-displacement mechanism. The nucleophile active site attacks the C1' of nucleotide 34 to detach the guanine base from the RNA, forming a covalent enzyme-RNA intermediate. The proton acceptor active site deprotonates the incoming PreQ1, allowing a nucleophilic attack on the C1' of the ribose to form the product. After dissociation, two additional enzymatic reactions on the tRNA convert PreQ1 to queuine (Q), resulting in the hypermodified nucleoside queuosine (7-(((4,5-cis-dihydroxy-2-cyclopenten-1-yl)amino)methyl)-7-deazaguanosine). In Synechococcus sp. (strain CC9605), this protein is Queuine tRNA-ribosyltransferase.